The sequence spans 115 residues: U3-lycotoxin-Ls1a (115 aa).

The signal sequence occupies residues 1-20; that stretch reads MKFVLLFGVFLVTLFSYSSA. A propeptide spanning residues 21 to 44 is cleaved from the precursor; sequence EMLDDFDQADEDELLSLIEKEEAR. Cystine bridges form between C48–C63, C55–C72, C62–C87, and C74–C85.

The protein belongs to the neurotoxin 19 (CSTX) family. 01 subfamily. Expressed by the venom gland.

Its subcellular location is the secreted. The chain is U3-lycotoxin-Ls1a from Lycosa singoriensis (Wolf spider).